The following is a 361-amino-acid chain: 3-dehydroquinate synthase (361 aa).

NAD(+) contacts are provided by residues 71–76, 105–109, 129–130, K142, K151, and 169–172; these read DGEQNK, GVIGD, TT, and CLNT. Zn(2+) contacts are provided by E184, H247, and H264.

Belongs to the sugar phosphate cyclases superfamily. Dehydroquinate synthase family. The cofactor is Co(2+). Zn(2+) serves as cofactor. Requires NAD(+) as cofactor.

It is found in the cytoplasm. It catalyses the reaction 7-phospho-2-dehydro-3-deoxy-D-arabino-heptonate = 3-dehydroquinate + phosphate. It participates in metabolic intermediate biosynthesis; chorismate biosynthesis; chorismate from D-erythrose 4-phosphate and phosphoenolpyruvate: step 2/7. Functionally, catalyzes the conversion of 3-deoxy-D-arabino-heptulosonate 7-phosphate (DAHP) to dehydroquinate (DHQ). The protein is 3-dehydroquinate synthase of Sodalis glossinidius (strain morsitans).